The chain runs to 331 residues: Peroxidase 60 (331 aa).

The N-terminal stretch at 1–26 (MAVKISTIEVLILSLALLSFGHGCYG) is a signal peptide. 4 disulfide bridges follow: cysteine 37–cysteine 113, cysteine 70–cysteine 75, cysteine 119–cysteine 321, and cysteine 198–cysteine 230. Histidine 68 (proton acceptor) is an active-site residue. Residues aspartate 69, glycine 74, aspartate 76, and serine 78 each coordinate Ca(2+). A substrate-binding site is contributed by proline 161. Residue histidine 191 coordinates heme b. Threonine 192 is a Ca(2+) binding site. A glycan (N-linked (GlcNAc...) asparagine) is linked at asparagine 245. 2 residues coordinate Ca(2+): serine 248 and aspartate 253.

Belongs to the peroxidase family. Classical plant (class III) peroxidase subfamily. The cofactor is heme b. It depends on Ca(2+) as a cofactor. As to expression, expressed in roots, slightly in leaves.

The protein localises to the secreted. The catalysed reaction is 2 a phenolic donor + H2O2 = 2 a phenolic radical donor + 2 H2O. In terms of biological role, removal of H(2)O(2), oxidation of toxic reductants, biosynthesis and degradation of lignin, suberization, auxin catabolism, response to environmental stresses such as wounding, pathogen attack and oxidative stress. These functions might be dependent on each isozyme/isoform in each plant tissue. The sequence is that of Peroxidase 60 (PER60) from Arabidopsis thaliana (Mouse-ear cress).